Here is a 288-residue protein sequence, read N- to C-terminus: Anthranilate synthase beta subunit 1, chloroplastic (288 aa).

The transit peptide at 1–58 (MACSHLAAAAAAASPAAARSPAASSAATASAFARLSATPRVASGGLAVRGQRGVAAVV) directs the protein to the chloroplast. A Glutamine amidotransferase type-1 domain is found at 83–282 (PIIVIDNYDS…VRFIEELEKQ (200 aa)). L-glutamine is bound at residue 134–136 (GPG). Catalysis depends on Cys-161, which acts as the Nucleophile. L-glutamine contacts are provided by residues Gln-165 and 215–216 (SL). Active-site residues include His-256 and Glu-258.

Heterotetramer consisting of two non-identical subunits: a beta subunit and a large alpha subunit. In terms of tissue distribution, expressed in roots and leaves.

It localises to the plastid. The protein localises to the chloroplast. It carries out the reaction chorismate + L-glutamine = anthranilate + pyruvate + L-glutamate + H(+). Its pathway is amino-acid biosynthesis; L-tryptophan biosynthesis; L-tryptophan from chorismate: step 1/5. Part of a heterotetrameric complex that catalyzes the two-step biosynthesis of anthranilate, an intermediate in the biosynthesis of L-tryptophan. In the first step, the glutamine-binding beta subunit of anthranilate synthase (AS) provides the glutamine amidotransferase activity which generates ammonia as a substrate that, along with chorismate, is used in the second step, catalyzed by the large alpha subunit of AS to produce anthranilate. The protein is Anthranilate synthase beta subunit 1, chloroplastic of Oryza sativa subsp. japonica (Rice).